A 1273-amino-acid polypeptide reads, in one-letter code: Restriction of telomere capping protein 1 (1273 aa).

The segment covering 1-16 (MNNRPIPRNQASSSLG) has biased composition (polar residues). 2 disordered regions span residues 1–20 (MNNRPIPRNQASSSLGRNDL) and 69–93 (LRESSYFDERPPVQDTGVPKSSGLY). WD repeat units follow at residues 119 to 164 (AGKT…KRSK), 166 to 207 (TKLS…SIDN), 215 to 255 (QHVR…SRTL), 327 to 366 (AHSGPGLCLNWHPYQDYISTGGRDGKCCLWYVGDGKPGTD), and 448 to 486 (STSSASLGFVWWDDNLIFNIDKDNRINGWYLDREPTVLD). Residues 521–559 (ANIEESKKPPNQRVSINSLSGTAGGGNSGGGSNSGMIGS) are disordered. A compositionally biased stretch (gly residues) spans 542-553 (TAGGGNSGGGSN). Residues 639-679 (NNMRVSQLPPERKSLYSPEVQAIRESPVKVFKFLAKELEFS) form a WD 6 repeat. The tract at residues 741 to 777 (KEGSESLIESDGESSAKSHESDDNSSDADKKENAKDG) is disordered. The span at 754 to 777 (SSAKSHESDDNSSDADKKENAKDG) shows a compositional bias: basic and acidic residues. One copy of the WD 7 repeat lies at 784-824 (KIDILLELIPICGHNASVYSYIDDLPNFKIWILIRDSLLWD). Polar residues predominate over residues 839–848 (ETQSTDQIGQ). 2 disordered regions span residues 839-861 (ETQSTDQIGQPITMGNDDSLASD) and 880-971 (ALRS…TNKR). The segment covering 880-890 (ALRSDSDEPKD) has biased composition (basic and acidic residues). The span at 898-909 (LKSQLTKIQETE) shows a compositional bias: polar residues. Residues 941 to 954 (DSDSAVLEDDDNEE) are compositionally biased toward acidic residues. A WD 8 repeat occupies 1058–1101 (STAEFFNKSPMRPLSPVAPVSSFKSNPTEFLPPWNTRRLLKQIF). The RING-type; degenerate zinc-finger motif lies at 1225–1267 (CVFCERPIKTLAIGLLECGHEGHFQCLQSWFLDEGMAECPGGC).

It belongs to the WD repeat RTC1 family.

The protein localises to the vacuole. May be involved in a process influencing telomere capping. The chain is Restriction of telomere capping protein 1 (RTC1) from Zygosaccharomyces rouxii (strain ATCC 2623 / CBS 732 / NBRC 1130 / NCYC 568 / NRRL Y-229).